Here is a 415-residue protein sequence, read N- to C-terminus: Elongation factor 1-gamma 1 (415 aa).

Ser2 bears the N-acetylserine mark. Positions 2–78 (SQGTLYANFR…YLVKLSQDDK (77 aa)) constitute a GST N-terminal domain. Thr32 bears the Phosphothreonine mark. The 127-residue stretch at 89-215 (DLNAQAQIIR…KDFKFADKPL (127 aa)) folds into the GST C-terminal domain. The tract at residues 212–256 (DKPLSPPQKKKEKKAPAAAPAASKKKEEAKPAATETETSSKKPKH) is disordered. Positions 254–415 (PKHPLELLGK…KEIVDGKVLK (162 aa)) constitute an EF-1-gamma C-terminal domain.

In terms of assembly, the eukaryotic elongation factor 1 complex (eEF1) is probably a heterohexamer. Two trimeric complexes, each composed of eEF1A (TEF1 or TEF2), eEF1Balpha (EFB1) and eEF1Bgamma (CAM1 or TEF4), are probably dimerized via the eF1Bgamma subunits. The eEF1B subcomplex with the GEF activity is formed of eEF1Balpha and eEF1Bgamma. CAM1 interacts with EFB1. Component of a complex bound to MXR1 promoter region.

The protein resides in the cytoplasm. It is found in the nucleus. The protein operates within protein biosynthesis; polypeptide chain elongation. Its function is as follows. Subunit of the eukaryotic elongation factor 1 complex (eEF1). Probably plays a role in anchoring the complex to other cellular components. May be involved in transcriptional regulation of MXR1. This chain is Elongation factor 1-gamma 1 (CAM1), found in Saccharomyces cerevisiae (strain ATCC 204508 / S288c) (Baker's yeast).